A 463-amino-acid chain; its full sequence is Cysteine--tRNA ligase (463 aa).

Position 28 (cysteine 28) interacts with Zn(2+). The 'HIGH' region signature appears at 30–40 (ITIYDLCHIGH). Zn(2+)-binding residues include cysteine 209, histidine 234, and glutamate 238. The short motif at 266–270 (KMSKS) is the 'KMSKS' region element. Lysine 269 contributes to the ATP binding site.

Belongs to the class-I aminoacyl-tRNA synthetase family. As to quaternary structure, monomer. Zn(2+) serves as cofactor.

It localises to the cytoplasm. The enzyme catalyses tRNA(Cys) + L-cysteine + ATP = L-cysteinyl-tRNA(Cys) + AMP + diphosphate. This is Cysteine--tRNA ligase from Proteus mirabilis (strain HI4320).